The chain runs to 1888 residues: Fatty acid synthase subunit alpha (1888 aa).

The disordered stretch occupies residues 98–118 (DLAPVEEPNAEEQTGAAATPA). In terms of domain architecture, Carrier spans 146 to 221 (VKASLLLHVL…ETFQDTFAGS (76 aa)). Ser181 is subject to O-(pantetheine 4'-phosphoryl)serine. The beta-ketoacyl reductase stretch occupies residues 675-874 (DKYVLITGAG…CGAIIGWTRG (200 aa)). In terms of domain architecture, Ketosynthase family 3 (KS3) spans 1119 to 1657 (KQMIQEVVIE…QKGAQAVAVH (539 aa)). Catalysis depends on for beta-ketoacyl synthase activity residues Cys1305, His1542, and His1583. Mg(2+)-binding residues include Asp1774, Val1775, and Glu1776. Residues 1774–1776 (DVE), Tyr1800, Ser1810, 1819–1829 (EAVFKSLGVKS), 1843–1846 (REAG), and 1873–1875 (ISH) each bind acetyl-CoA. Residues Ser1874 and His1875 each contribute to the Mg(2+) site.

It belongs to the thiolase-like superfamily. Fungal fatty acid synthetase subunit alpha family. In terms of assembly, fatty acid synthase is composed of alpha and beta subunits.

The enzyme catalyses acetyl-CoA + n malonyl-CoA + 2n NADPH + 4n H(+) = a long-chain-acyl-CoA + n CoA + n CO2 + 2n NADP(+).. It catalyses the reaction a fatty acyl-[ACP] + malonyl-[ACP] + H(+) = a 3-oxoacyl-[ACP] + holo-[ACP] + CO2. The catalysed reaction is a (3R)-hydroxyacyl-[ACP] + NADP(+) = a 3-oxoacyl-[ACP] + NADPH + H(+). Fatty acid synthetase catalyzes the formation of long-chain fatty acids from acetyl-CoA, malonyl-CoA and NADPH. The alpha subunit contains domains for: acyl carrier protein, 3-oxoacyl-[acyl-carrier-protein] reductase, and 3-oxoacyl-[acyl-carrier-protein] synthase. In this species, higher amounts of C18 than C16 fatty acids are produced. This is Fatty acid synthase subunit alpha (FAS2) from Lachancea kluyveri (Yeast).